A 974-amino-acid chain; its full sequence is Membrane-associated phosphatidylinositol transfer protein 3 (974 aa).

Phosphoserine occurs at positions 30, 31, 109, 295, 298, 321, 343, and 495. A disordered region spans residues Gly284 to Val304. Over residues Arg292–Thr302 the composition is skewed to polar residues. 2 disordered regions span residues Ile323–Ser346 and Ser491–Pro536. In terms of domain architecture, DDHD spans Phe390–Arg594. A compositionally biased stretch (low complexity) spans Glu520–Ser533. Phosphoserine occurs at positions 612, 907, 928, and 946. The segment at Met927–Pro974 is disordered.

Belongs to the PtdIns transfer protein family. PI transfer class IIA subfamily. As to quaternary structure, interacts with PTK2B via its C-terminus. As to expression, detected in brain and spleen, and at low levels in ovary.

The protein localises to the endomembrane system. In terms of biological role, catalyzes the transfer of phosphatidylinositol and phosphatidylcholine between membranes (in vitro). Binds calcium ions. The chain is Membrane-associated phosphatidylinositol transfer protein 3 (PITPNM3) from Homo sapiens (Human).